A 253-amino-acid chain; its full sequence is Ribonuclease HII (253 aa).

One can recognise an RNase H type-2 domain in the interval 70 to 253 (NLIAGIDEVG…KSFEPIKSML (184 aa)). Residues aspartate 76, glutamate 77, and aspartate 168 each coordinate a divalent metal cation.

Belongs to the RNase HII family. The cofactor is Mn(2+). Requires Mg(2+) as cofactor.

It localises to the cytoplasm. The catalysed reaction is Endonucleolytic cleavage to 5'-phosphomonoester.. Functionally, endonuclease that specifically degrades the RNA of RNA-DNA hybrids. This Streptococcus agalactiae serotype Ia (strain ATCC 27591 / A909 / CDC SS700) protein is Ribonuclease HII.